Consider the following 602-residue polypeptide: Elongation factor 4 (602 aa).

Residues 6–188 (DRIRNFCIIA…RIVTRIPPPG (183 aa)) form the tr-type G domain. Residues 18–23 (DHGKST) and 135–138 (NKID) contribute to the GTP site.

This sequence belongs to the TRAFAC class translation factor GTPase superfamily. Classic translation factor GTPase family. LepA subfamily.

The protein localises to the cell membrane. The catalysed reaction is GTP + H2O = GDP + phosphate + H(+). Functionally, required for accurate and efficient protein synthesis under certain stress conditions. May act as a fidelity factor of the translation reaction, by catalyzing a one-codon backward translocation of tRNAs on improperly translocated ribosomes. Back-translocation proceeds from a post-translocation (POST) complex to a pre-translocation (PRE) complex, thus giving elongation factor G a second chance to translocate the tRNAs correctly. Binds to ribosomes in a GTP-dependent manner. The protein is Elongation factor 4 of Pelotomaculum thermopropionicum (strain DSM 13744 / JCM 10971 / SI).